A 427-amino-acid polypeptide reads, in one-letter code: Homogentisate 1,2-dioxygenase (427 aa).

H285 serves as the catalytic Proton acceptor. H328 and E334 together coordinate Fe cation. The homogentisate site is built by Y343 and H364. H364 provides a ligand contact to Fe cation.

The protein belongs to the homogentisate dioxygenase family. In terms of assembly, hexamer; dimer of trimers. Fe cation is required as a cofactor.

It carries out the reaction homogentisate + O2 = 4-maleylacetoacetate + H(+). It participates in amino-acid degradation; L-phenylalanine degradation; acetoacetate and fumarate from L-phenylalanine: step 4/6. In terms of biological role, involved in the catabolism of homogentisate (2,5-dihydroxyphenylacetate or 2,5-OH-PhAc), a central intermediate in the degradation of phenylalanine and tyrosine. Catalyzes the oxidative ring cleavage of the aromatic ring of homogentisate to yield maleylacetoacetate. This chain is Homogentisate 1,2-dioxygenase, found in Caulobacter sp. (strain K31).